Reading from the N-terminus, the 233-residue chain is tRNA1(Val) (adenine(37)-N6)-methyltransferase (233 aa).

This sequence belongs to the methyltransferase superfamily. tRNA (adenine-N(6)-)-methyltransferase family.

It is found in the cytoplasm. It carries out the reaction adenosine(37) in tRNA1(Val) + S-adenosyl-L-methionine = N(6)-methyladenosine(37) in tRNA1(Val) + S-adenosyl-L-homocysteine + H(+). Its function is as follows. Specifically methylates the adenine in position 37 of tRNA(1)(Val) (anticodon cmo5UAC). This is tRNA1(Val) (adenine(37)-N6)-methyltransferase from Shewanella amazonensis (strain ATCC BAA-1098 / SB2B).